The following is a 278-amino-acid chain: Large ribosomal subunit protein uL2 (278 aa).

2 disordered regions span residues 33 to 53 and 221 to 278; these read LTEG…TSRG and RGVA…KKKR. A compositionally biased stretch (basic residues) spans 269–278; the sequence is IRSRHAKKKR.

It belongs to the universal ribosomal protein uL2 family. Part of the 50S ribosomal subunit. Forms a bridge to the 30S subunit in the 70S ribosome.

Functionally, one of the primary rRNA binding proteins. Required for association of the 30S and 50S subunits to form the 70S ribosome, for tRNA binding and peptide bond formation. It has been suggested to have peptidyltransferase activity; this is somewhat controversial. Makes several contacts with the 16S rRNA in the 70S ribosome. This Novosphingobium aromaticivorans (strain ATCC 700278 / DSM 12444 / CCUG 56034 / CIP 105152 / NBRC 16084 / F199) protein is Large ribosomal subunit protein uL2.